Here is a 157-residue protein sequence, read N- to C-terminus: MAEEEHVDFEGGEAGASLTFPMQCSALRKNGHVVIKGRPCKIVDMSTSKTGKHGHAKVHIVALDIFNGRKYEDMSPSTHNMDVPVVKRDEYQLVNIDDGYLNLMTTDGTTKDDVRLPEGELGNEIEEGFDEGRDLIITVVSAMGEETALACRDAPSS.

Position 52 is a hypusine (K52). 2 positions are modified to phosphoserine: S75 and S77. T78 is subject to Phosphothreonine.

The protein belongs to the eIF-5A family. Lys-52 undergoes hypusination, a unique post-translational modification that consists in the addition of a butylamino group from spermidine to lysine side chain, leading to the formation of the unusual amino acid hypusine. eIF-5As are the only known proteins to undergo this modification, which is essential for their function.

The protein localises to the cytoplasm. Functionally, translation factor that promotes translation elongation and termination, particularly upon ribosome stalling at specific amino acid sequence contexts. Binds between the exit (E) and peptidyl (P) site of the ribosome and promotes rescue of stalled ribosome: specifically required for efficient translation of polyproline-containing peptides as well as other motifs that stall the ribosome. Acts as a ribosome quality control (RQC) cofactor by joining the RQC complex to facilitate peptidyl transfer during CAT tailing step. The polypeptide is Eukaryotic translation initiation factor 5A-1 (tif51a) (Schizosaccharomyces pombe (strain 972 / ATCC 24843) (Fission yeast)).